We begin with the raw amino-acid sequence, 101 residues long: Replication restart protein PriB (101 aa).

An SSB domain is found at 1–101 (MTTNNLVLSG…IHAENVELKT (101 aa)).

It belongs to the PriB family. As to quaternary structure, homodimer. Interacts with PriA and DnaT. Component of the replication restart primosome. Primosome assembly occurs via a 'hand-off' mechanism. PriA binds to replication forks, subsequently PriB then DnaT bind; DnaT then displaces ssDNA to generate the helicase loading substrate.

Its function is as follows. Involved in the restart of stalled replication forks, which reloads the replicative helicase on sites other than the origin of replication; the PriA-PriB pathway is the major replication restart pathway. During primosome assembly it facilitates complex formation between PriA and DnaT on DNA; stabilizes PriA on DNA. Stimulates the DNA unwinding activity of PriA helicase. This is Replication restart protein PriB from Shewanella baltica (strain OS223).